Consider the following 185-residue polypeptide: Elongation factor P (185 aa).

Belongs to the elongation factor P family.

It localises to the cytoplasm. It functions in the pathway protein biosynthesis; polypeptide chain elongation. Functionally, involved in peptide bond synthesis. Stimulates efficient translation and peptide-bond synthesis on native or reconstituted 70S ribosomes in vitro. Probably functions indirectly by altering the affinity of the ribosome for aminoacyl-tRNA, thus increasing their reactivity as acceptors for peptidyl transferase. This Geobacillus thermodenitrificans (strain NG80-2) protein is Elongation factor P.